The following is a 161-amino-acid chain: MKTIPSFTIDHIRLLRGIYVSRKDEVGGETVTTFDIRMKEPNREPALGQGALHTIEHLAATYLRNHPIWSDKIVYWGPMGCLTGNYLLMKGDLKSEDIVELMQETFRFVADFEGEVPGAAPKDCGNYLLHDLPMAKWESAKYLHEVLEHMTKDNLYYPTKE.

Fe cation is bound by residues histidine 53, histidine 57, and cysteine 124.

It belongs to the LuxS family. Homodimer. Fe cation serves as cofactor.

The catalysed reaction is S-(5-deoxy-D-ribos-5-yl)-L-homocysteine = (S)-4,5-dihydroxypentane-2,3-dione + L-homocysteine. Its function is as follows. Involved in the synthesis of autoinducer 2 (AI-2) which is secreted by bacteria and is used to communicate both the cell density and the metabolic potential of the environment. The regulation of gene expression in response to changes in cell density is called quorum sensing. Catalyzes the transformation of S-ribosylhomocysteine (RHC) to homocysteine (HC) and 4,5-dihydroxy-2,3-pentadione (DPD). The polypeptide is S-ribosylhomocysteine lyase (Phocaeicola vulgatus (strain ATCC 8482 / DSM 1447 / JCM 5826 / CCUG 4940 / NBRC 14291 / NCTC 11154) (Bacteroides vulgatus)).